Consider the following 156-residue polypeptide: Small ribosomal subunit protein uS7 (156 aa).

This sequence belongs to the universal ribosomal protein uS7 family. Part of the 30S ribosomal subunit. Contacts proteins S9 and S11.

Its function is as follows. One of the primary rRNA binding proteins, it binds directly to 16S rRNA where it nucleates assembly of the head domain of the 30S subunit. Is located at the subunit interface close to the decoding center, probably blocks exit of the E-site tRNA. This Methylobacterium nodulans (strain LMG 21967 / CNCM I-2342 / ORS 2060) protein is Small ribosomal subunit protein uS7.